We begin with the raw amino-acid sequence, 786 residues long: Endonuclease MutS2 (786 aa).

335 to 342 (GPNTGGKT) serves as a coordination point for ATP. The Smr domain occupies 711–786 (LDLRGERFEN…GLGVTVVELK (76 aa)).

The protein belongs to the DNA mismatch repair MutS family. MutS2 subfamily. As to quaternary structure, homodimer. Binds to stalled ribosomes, contacting rRNA.

Functionally, endonuclease that is involved in the suppression of homologous recombination and thus may have a key role in the control of bacterial genetic diversity. Acts as a ribosome collision sensor, splitting the ribosome into its 2 subunits. Detects stalled/collided 70S ribosomes which it binds and splits by an ATP-hydrolysis driven conformational change. Acts upstream of the ribosome quality control system (RQC), a ribosome-associated complex that mediates the extraction of incompletely synthesized nascent chains from stalled ribosomes and their subsequent degradation. Probably generates substrates for RQC. This Bacillus cereus (strain B4264) protein is Endonuclease MutS2.